Reading from the N-terminus, the 83-residue chain is Apolipoprotein C-I, acidic form (83 aa).

Positions 1–26 (MRLFLSLPVLVVVLSMVLEGPAPAQG) are cleaved as a signal peptide.

The protein belongs to the apolipoprotein C1 family.

It is found in the secreted. This Pan troglodytes (Chimpanzee) protein is Apolipoprotein C-I, acidic form (APOC1A).